The following is a 367-amino-acid chain: Phosphoribosylaminoimidazole-succinocarboxamide synthase (367 aa).

It belongs to the SAICAR synthetase family.

It carries out the reaction 5-amino-1-(5-phospho-D-ribosyl)imidazole-4-carboxylate + L-aspartate + ATP = (2S)-2-[5-amino-1-(5-phospho-beta-D-ribosyl)imidazole-4-carboxamido]succinate + ADP + phosphate + 2 H(+). Its pathway is purine metabolism; IMP biosynthesis via de novo pathway; 5-amino-1-(5-phospho-D-ribosyl)imidazole-4-carboxamide from 5-amino-1-(5-phospho-D-ribosyl)imidazole-4-carboxylate: step 1/2. The protein is Phosphoribosylaminoimidazole-succinocarboxamide synthase of Shewanella baltica (strain OS195).